Consider the following 270-residue polypeptide: Formamidopyrimidine-DNA glycosylase (270 aa).

Pro2 serves as the catalytic Schiff-base intermediate with DNA. Glu3 (proton donor) is an active-site residue. The Proton donor; for beta-elimination activity role is filled by Lys57. Residues His90, Arg109, and Lys150 each contribute to the DNA site. The segment at 235–269 (LVYGNKDKPCPRCGTKIKSIIIGQRNSFFCPQCQK) adopts an FPG-type zinc-finger fold. The active-site Proton donor; for delta-elimination activity is Arg259.

The protein belongs to the FPG family. Monomer. Zn(2+) is required as a cofactor.

The catalysed reaction is Hydrolysis of DNA containing ring-opened 7-methylguanine residues, releasing 2,6-diamino-4-hydroxy-5-(N-methyl)formamidopyrimidine.. It catalyses the reaction 2'-deoxyribonucleotide-(2'-deoxyribose 5'-phosphate)-2'-deoxyribonucleotide-DNA = a 3'-end 2'-deoxyribonucleotide-(2,3-dehydro-2,3-deoxyribose 5'-phosphate)-DNA + a 5'-end 5'-phospho-2'-deoxyribonucleoside-DNA + H(+). Functionally, involved in base excision repair of DNA damaged by oxidation or by mutagenic agents. Acts as a DNA glycosylase that recognizes and removes damaged bases. Has a preference for oxidized purines, such as 7,8-dihydro-8-oxoguanine (8-oxoG). Has AP (apurinic/apyrimidinic) lyase activity and introduces nicks in the DNA strand. Cleaves the DNA backbone by beta-delta elimination to generate a single-strand break at the site of the removed base with both 3'- and 5'-phosphates. The chain is Formamidopyrimidine-DNA glycosylase from Histophilus somni (strain 2336) (Haemophilus somnus).